The following is a 297-amino-acid chain: Polyamine aminopropyltransferase 2 (297 aa).

Residues Phe-26–Lys-258 enclose the PABS domain. Gln-53 contributes to the S-methyl-5'-thioadenosine binding site. Residues His-84 and Glu-108 each coordinate spermidine. S-methyl-5'-thioadenosine is bound by residues Asp-128 and Asp-157 to Val-158. The active-site Proton acceptor is the Asp-176. Residue Pro-184 participates in S-methyl-5'-thioadenosine binding.

It belongs to the spermidine/spermine synthase family. Homodimer or homotetramer.

It localises to the cytoplasm. It catalyses the reaction S-adenosyl 3-(methylsulfanyl)propylamine + putrescine = S-methyl-5'-thioadenosine + spermidine + H(+). The protein operates within amine and polyamine biosynthesis; spermidine biosynthesis; spermidine from putrescine: step 1/1. In terms of biological role, catalyzes the irreversible transfer of a propylamine group from the amino donor S-adenosylmethioninamine (decarboxy-AdoMet) to putrescine (1,4-diaminobutane) to yield spermidine. This chain is Polyamine aminopropyltransferase 2, found in Caldanaerobacter subterraneus subsp. tengcongensis (strain DSM 15242 / JCM 11007 / NBRC 100824 / MB4) (Thermoanaerobacter tengcongensis).